The chain runs to 746 residues: Histone-lysine N-methyltransferase EZH2 (746 aa).

Residues 1 to 340 are interaction with DNMT1, DNMT3A and DNMT3B; sequence MGQTGKKSEK…AKEFAAALTA (340 aa). At S21 the chain carries Phosphoserine; by PKB/AKT1. The interaction with EED stretch occupies residues 39–68; sequence KSMFSSNRQKILERTEILNQEWKQRRIQPV. A glycan (O-linked (GlcNAc) serine) is linked at S75. At S76 the chain carries Phosphoserine. The interval 180–222 is disordered; sequence QYNDDDDDDDGDDPEEREEKQKDLEDHRDDKESRPPRKFPSDK. Over residues 182–195 the composition is skewed to acidic residues; the sequence is NDDDDDDDGDDPEE. Residues 196-222 are compositionally biased toward basic and acidic residues; that stretch reads REEKQKDLEDHRDDKESRPPRKFPSDK. An interaction with CDYL region spans residues 329–522; the sequence is EGAKEFAAAL…SSNHVYNYQP (194 aa). At T339 the chain carries Phosphothreonine. The tract at residues 340–426 is disordered; sequence AERIKTPPKR…PIKMKPNIEP (87 aa). T345 carries the post-translational modification Phosphothreonine; by CDK1 and CDK2. Residues 345-357 show a composition bias toward basic residues; the sequence is TPPKRPGGRRRGR. Phosphoserine occurs at positions 363 and 366. At T367 the chain carries Phosphothreonine. Over residues 374–385 the composition is skewed to basic and acidic residues; that stretch reads ESKDTDSDREAG. Phosphothreonine is present on T487. In terms of domain architecture, CXC spans 503 to 605; that stretch reads CRKIQLKKDG…SKNVSCKNCS (103 aa). An SET domain is found at 612-727; sequence KHLLLAPSDV…TGEELFFDYR (116 aa). K634 participates in a covalent cross-link: Glycyl lysine isopeptide (Lys-Gly) (interchain with G-Cter in SUMO2).

It belongs to the class V-like SAM-binding methyltransferase superfamily. Histone-lysine methyltransferase family. EZ subfamily. In terms of assembly, component of the PRC2/EED-EZH2 complex, which includes EED, EZH2, SUZ12, RBBP4 and RBBP7 and possibly AEBP2. The minimum components required for methyltransferase activity of the PRC2/EED-EZH2 complex are EED, EZH2 and SUZ12. The PRC2 complex may also interact with DNMT1, DNMT3A, DNMT3B and PHF1 via the EZH2 subunit and with SIRT1 via the SUZ12 subunit. Interacts with HDAC1 and HDAC2. Binds ATRX via the SET domain. Interacts with PRAME. Interacts with CDYL. Interacts with BMAL1, CLOCK and CRY1. Interacts with DNMT3L; the interaction is direct. Interacts with EZHIP; the interaction blocks EZH2 methyltransferase activity. Interacts with ZNF263; recruited to the SIX3 promoter along with other proteins involved in chromatin modification and transcriptional corepression where it contributes to transcriptional repression. Interacts with ARMC12. Interacts with ZMYND8; the interaction is dependent on the presence of chromatin. Interacts with DDX18; this interaction inhibits the PRC2 complex. Post-translationally, phosphorylated by AKT1. Phosphorylation by AKT1 reduces methyltransferase activity. Phosphorylation at Thr-345 by CDK1 and CDK2 promotes maintenance of H3K27me3 levels at EZH2-target loci, thus leading to epigenetic gene silencing. Sumoylated. In terms of processing, glycosylated: O-GlcNAcylation at Ser-75 by OGT increases stability of EZH2 and facilitates the formation of H3K27me3 by the PRC2/EED-EZH2 complex.

It localises to the nucleus. The enzyme catalyses L-lysyl(27)-[histone H3] + 3 S-adenosyl-L-methionine = N(6),N(6),N(6)-trimethyl-L-lysyl(27)-[histone H3] + 3 S-adenosyl-L-homocysteine + 3 H(+). Its function is as follows. Polycomb group (PcG) protein. Catalytic subunit of the PRC2/EED-EZH2 complex, which methylates 'Lys-9' (H3K9me) and 'Lys-27' (H3K27me) of histone H3, leading to transcriptional repression of the affected target gene. Able to mono-, di- and trimethylate 'Lys-27' of histone H3 to form H3K27me1, H3K27me2 and H3K27me3, respectively. Displays a preference for substrates with less methylation, loses activity when progressively more methyl groups are incorporated into H3K27, H3K27me0 &gt; H3K27me1 &gt; H3K27me2. Compared to EZH1-containing complexes, it is more abundant in embryonic stem cells and plays a major role in forming H3K27me3, which is required for embryonic stem cell identity and proper differentiation. The PRC2/EED-EZH2 complex may also serve as a recruiting platform for DNA methyltransferases, thereby linking two epigenetic repression systems. EZH2 can also methylate non-histone proteins such as the transcription factor GATA4 and the nuclear receptor RORA. Regulates the circadian clock via histone methylation at the promoter of the circadian genes. Essential for the CRY1/2-mediated repression of the CLOCK-BMAL1 transcriptional activation of PER1/2. Involved in the di and trimethylation of 'Lys-27' of histone H3 on PER1/2 promoters which is necessary for the CRY1/2 proteins to inhibit transcription. The sequence is that of Histone-lysine N-methyltransferase EZH2 (EZH2) from Macaca fascicularis (Crab-eating macaque).